The chain runs to 274 residues: Ribosomal RNA small subunit methyltransferase A (274 aa).

Positions 28, 30, 55, 77, 103, and 122 each coordinate S-adenosyl-L-methionine.

The protein belongs to the class I-like SAM-binding methyltransferase superfamily. rRNA adenine N(6)-methyltransferase family. RsmA subfamily.

The protein resides in the cytoplasm. It catalyses the reaction adenosine(1518)/adenosine(1519) in 16S rRNA + 4 S-adenosyl-L-methionine = N(6)-dimethyladenosine(1518)/N(6)-dimethyladenosine(1519) in 16S rRNA + 4 S-adenosyl-L-homocysteine + 4 H(+). Its function is as follows. Specifically dimethylates two adjacent adenosines (A1518 and A1519) in the loop of a conserved hairpin near the 3'-end of 16S rRNA in the 30S particle. May play a critical role in biogenesis of 30S subunits. This Sinorhizobium medicae (strain WSM419) (Ensifer medicae) protein is Ribosomal RNA small subunit methyltransferase A.